The following is an 82-amino-acid chain: Proline, histidine and glycine-rich protein 1 (82 aa).

The interval 20–82 (HCGPPPGHGP…PGHPPPGPHH (63 aa)) is disordered.

The chain is Proline, histidine and glycine-rich protein 1 (PHGR1) from Homo sapiens (Human).